A 107-amino-acid chain; its full sequence is Nucleoid-associated protein RP866 (107 aa).

Belongs to the YbaB/EbfC family. In terms of assembly, homodimer.

The protein resides in the cytoplasm. It localises to the nucleoid. Its function is as follows. Binds to DNA and alters its conformation. May be involved in regulation of gene expression, nucleoid organization and DNA protection. The chain is Nucleoid-associated protein RP866 from Rickettsia prowazekii (strain Madrid E).